A 137-amino-acid polypeptide reads, in one-letter code: Large-conductance mechanosensitive channel (137 aa).

3 consecutive transmembrane segments (helical) span residues 15–35, 38–58, and 80–100; these read IDLAIGVIIGGAFGGLVNSIV, ILMPIIGFITGGIDFSNMFIQ, and GNFITLLINFLIIAWVLFLFV.

This sequence belongs to the MscL family. As to quaternary structure, homopentamer.

Its subcellular location is the cell inner membrane. Its function is as follows. Channel that opens in response to stretch forces in the membrane lipid bilayer. May participate in the regulation of osmotic pressure changes within the cell. This chain is Large-conductance mechanosensitive channel, found in Bartonella quintana (strain Toulouse) (Rochalimaea quintana).